We begin with the raw amino-acid sequence, 247 residues long: Probable transcriptional regulatory protein Asuc_1803 (247 aa).

This sequence belongs to the TACO1 family.

It is found in the cytoplasm. The sequence is that of Probable transcriptional regulatory protein Asuc_1803 from Actinobacillus succinogenes (strain ATCC 55618 / DSM 22257 / CCUG 43843 / 130Z).